The sequence spans 70 residues: DNA-directed RNA polymerase subunit omega (70 aa).

It belongs to the RNA polymerase subunit omega family. In terms of assembly, the RNAP catalytic core consists of 2 alpha, 1 beta, 1 beta' and 1 omega subunit. When a sigma factor is associated with the core the holoenzyme is formed, which can initiate transcription.

It catalyses the reaction RNA(n) + a ribonucleoside 5'-triphosphate = RNA(n+1) + diphosphate. Functionally, promotes RNA polymerase assembly. Latches the N- and C-terminal regions of the beta' subunit thereby facilitating its interaction with the beta and alpha subunits. In Shouchella clausii (strain KSM-K16) (Alkalihalobacillus clausii), this protein is DNA-directed RNA polymerase subunit omega.